A 387-amino-acid chain; its full sequence is Putative ribosomal RNA large subunit methyltransferase MJ1649 (387 aa).

The PUA domain maps to 5–81 (LIKLEIDRRA…EEIDYDFFYK (77 aa)).

The protein belongs to the methyltransferase superfamily. RlmI family.

It localises to the cytoplasm. This is Putative ribosomal RNA large subunit methyltransferase MJ1649 from Methanocaldococcus jannaschii (strain ATCC 43067 / DSM 2661 / JAL-1 / JCM 10045 / NBRC 100440) (Methanococcus jannaschii).